A 410-amino-acid chain; its full sequence is Cytochrome P450 (410 aa).

Cys359 is a binding site for heme.

The protein belongs to the cytochrome P450 family. Heme serves as cofactor.

This is Cytochrome P450 (cypA) from Bacillus subtilis (strain 168).